The following is a 408-amino-acid chain: Glutamate N-acetyltransferase (408 aa).

6 residues coordinate substrate: Thr-150, Lys-176, Thr-189, Glu-271, Asn-403, and Thr-408. Thr-189 serves as the catalytic Nucleophile.

Belongs to the ArgJ family. Heterotetramer of two alpha and two beta chains.

Its subcellular location is the cytoplasm. It carries out the reaction N(2)-acetyl-L-ornithine + L-glutamate = N-acetyl-L-glutamate + L-ornithine. It participates in amino-acid biosynthesis; L-arginine biosynthesis; L-ornithine and N-acetyl-L-glutamate from L-glutamate and N(2)-acetyl-L-ornithine (cyclic): step 1/1. Catalyzes the transfer of the acetyl group from N(2)-acetylornithine to glutamate, forming N-acetylglutamate and L-ornithine. In Methanococcus maripaludis (strain C5 / ATCC BAA-1333), this protein is Glutamate N-acetyltransferase.